Consider the following 388-residue polypeptide: MRYLTAGESHGPSLTAIIEGIPAGLTLHPADIDHELQRRQGGYGRGARMSIETDRVQISSGVRHGKTTGAPITLTVINKDHQKWLDVMAVGDIEETLKLKRRVKHPRPGHADLVGGIKYHFNDLRDALERSSARETTMRVAVGAVAKRILAELGIDMLHHILIFGGITITIPSKLSFRELQERALHSELSIVNPKQEEEIKTYIDKIKKEGDTIGGIIETIVQGVPAGLGSYVQWDKKLDAKLAQAVLSINAFKGVEFGVGFDMGFQKGSQVMDEITWTPTQGYGRQTNHLGGFEGGMTTGQPLVVKGVMKPIPTLYKPLMSVDIDSHEPYKATVERSDPTALPAAGVIMENVVATVLAKEILETFSSTTMSELQKAFSDYRAYVKQF.

Positions 39 and 45 each coordinate NADP(+). Residues 130–132 (RSS), 251–252 (NA), G296, 311–315 (KPIPT), and R337 each bind FMN.

It belongs to the chorismate synthase family. As to quaternary structure, homotetramer. Requires FMNH2 as cofactor.

It carries out the reaction 5-O-(1-carboxyvinyl)-3-phosphoshikimate = chorismate + phosphate. The protein operates within metabolic intermediate biosynthesis; chorismate biosynthesis; chorismate from D-erythrose 4-phosphate and phosphoenolpyruvate: step 7/7. Functionally, catalyzes the anti-1,4-elimination of the C-3 phosphate and the C-6 proR hydrogen from 5-enolpyruvylshikimate-3-phosphate (EPSP) to yield chorismate, which is the branch point compound that serves as the starting substrate for the three terminal pathways of aromatic amino acid biosynthesis. This reaction introduces a second double bond into the aromatic ring system. The sequence is that of Chorismate synthase from Streptococcus pyogenes serotype M12 (strain MGAS2096).